A 146-amino-acid chain; its full sequence is MGRFIFVSFGLLVLFLSLSGTAADCPSDWSSYEGHCYKPFNEPKNWADAENFCTQQHTGSHLVSFQSTEEADFVVKLAFQTFDYGIFWMGLSKIWNQCNWQWSNAAMLKYTDWAEESYCVYFKSTNNKWRSITCRMIANFVCEFQA.

An N-terminal signal peptide occupies residues Met-1 to Ala-23. Residues Asp-24–Ala-146 enclose the C-type lectin domain. 3 disulfides stabilise this stretch: Cys-25/Cys-36, Cys-53/Cys-142, and Cys-119/Cys-134. Residues Ser-64, Gln-66, and Glu-70 each contribute to the Ca(2+) site. A Ca(2+)-binding site is contributed by Glu-143.

It belongs to the snaclec family. In terms of assembly, heterodimer with subunit A of agkisacutacin or AaACP; disulfide-linked. Expressed by the venom gland.

The protein localises to the secreted. Anticoagulant protein which binds to the gamma-carboxyglutamic acid-domain regions of factors IX and factor X in the presence of calcium with a 1 to 1 stoichiometry. Also inhibits platelet aggregation by binding to platelet glycoprotein Ibalpha (GP1BA) and functioning as a blocker of vWF. Is devoid of hemorrhagic and lethal activities. Possesses antithrombotic and thrombolytic activities. Also hydrolyzes the Aalpha-chain of fibrinogen. Does not affect the Bbeta-chain and the gamma chain. This Deinagkistrodon acutus (Hundred-pace snake) protein is Snaclec anticoagulant protein subunit B.